The chain runs to 129 residues: Large-conductance mechanosensitive channel (129 aa).

3 consecutive transmembrane segments (helical) span residues Phe-8–Ser-28, Ile-30–Ile-50, and Gly-67–Val-87.

The protein belongs to the MscL family. As to quaternary structure, homopentamer.

The protein resides in the cell membrane. Functionally, channel that opens in response to stretch forces in the membrane lipid bilayer. May participate in the regulation of osmotic pressure changes within the cell. This Exiguobacterium sibiricum (strain DSM 17290 / CCUG 55495 / CIP 109462 / JCM 13490 / 255-15) protein is Large-conductance mechanosensitive channel.